Here is a 262-residue protein sequence, read N- to C-terminus: Ninja-family protein 3 (262 aa).

Residues 48-69 are disordered; the sequence is RRNSLTCNTSKEAAGQSPEEMN.

This sequence belongs to the Ninja family.

The protein resides in the nucleus. The polypeptide is Ninja-family protein 3 (Zea mays (Maize)).